Reading from the N-terminus, the 436-residue chain is Origin recognition complex subunit 4 (436 aa).

Residue lysine 7 is modified to N6-methyllysine. 67 to 74 (GPRGSGKT) serves as a coordination point for ATP.

It belongs to the ORC4 family. As to quaternary structure, component of ORC, a complex composed of at least 6 subunits: ORC1, ORC2, ORC3, ORC4, ORC5 and ORC6. ORC is regulated in a cell-cycle dependent manner. It is sequentially assembled at the exit from anaphase of mitosis and disassembled as cells enter S phase. Interacts with DBF4. Interacts with POLQ.

The protein localises to the nucleus. Component of the origin recognition complex (ORC) that binds origins of replication. DNA-binding is ATP-dependent. The specific DNA sequences that define origins of replication have not been identified yet. ORC is required to assemble the pre-replication complex necessary to initiate DNA replication. Binds histone H3 and H4 trimethylation marks H3K9me3, H3K27me3 and H4K20me3. This is Origin recognition complex subunit 4 (ORC4) from Homo sapiens (Human).